Reading from the N-terminus, the 1530-residue chain is Coiled-coil domain-containing protein 141 (1530 aa).

The stretch at 49–127 (NLLEIGSSQD…SMLERRRELL (79 aa)) is one Spectrin repeat. Position 91 is a phosphothreonine (threonine 91). 3 coiled-coil regions span residues 220-251 (IDSL…VLQL), 758-785 (LKEK…YEEI), and 865-967 (AKSL…VNKK). Disordered regions lie at residues 1153–1240 (SEER…PASS), 1259–1285 (LGKA…DTFT), 1324–1356 (PREV…SNVT), and 1369–1403 (SPGL…SVVS). Over residues 1334–1345 (PSSQAQEISLGT) the composition is skewed to polar residues. The Ig-like domain maps to 1409 to 1497 (PHFSRLLSNV…GTLSSKAILH (89 aa)).

Interacts with DISC1. Interacts preferentially with phosphorylated forms of myosin regulatory light chain (MRLC). Interacts (via the N-terminal region) with HDAC6; inhibits the deacetylase activity of HDAC6. Interacts with KIBRA (via the C-terminal region); retains AMPAR in the cytosol after internalization. Post-translationally, ubiquitinated and degradated by the CDC20-APC/C pathway. During brain development, CDC20-APC/C complex degrades CCDC141 after centrosome translocation into the dilated area. CCDC141 is restabilized in the dilation until the centrosome enters the dilation, at which point it is once again immediately destabilized by CDC20-APC/C complex. The oscillatory regulation of CCDC141 protein is needed for proper cortical migration. In terms of processing, phosphorylation at Thr-91 by PLK1 affects CCDC141 degradation.

It localises to the cytoplasm. The protein resides in the cytoskeleton. It is found in the microtubule organizing center. The protein localises to the centrosome. Functionally, plays a critical role in cortical radial and GnRH neurons migration during brain development. Regulates cortical radial migration by negatively controlling the activity of histone deacetylase 6 (HDAC6) and promotes centrosome maturation. CAMDI is required for dilation formation of cortical neurons during radial migration. Plays a critical role in learning and memory performance through regulation of AMPA-selective glutamate receptors (AMPARs) cell surface expression in competition with KIBRA. This Rattus norvegicus (Rat) protein is Coiled-coil domain-containing protein 141.